We begin with the raw amino-acid sequence, 89 residues long: Small ribosomal subunit protein uS15 (89 aa).

This sequence belongs to the universal ribosomal protein uS15 family. Part of the 30S ribosomal subunit. Forms a bridge to the 50S subunit in the 70S ribosome, contacting the 23S rRNA.

Functionally, one of the primary rRNA binding proteins, it binds directly to 16S rRNA where it helps nucleate assembly of the platform of the 30S subunit by binding and bridging several RNA helices of the 16S rRNA. Forms an intersubunit bridge (bridge B4) with the 23S rRNA of the 50S subunit in the ribosome. The sequence is that of Small ribosomal subunit protein uS15 from Pectobacterium atrosepticum (strain SCRI 1043 / ATCC BAA-672) (Erwinia carotovora subsp. atroseptica).